Consider the following 94-residue polypeptide: Cystatin-A3 (94 aa).

Positions 46-50 match the Secondary area of contact motif; that stretch reads QLVNG.

Belongs to the cystatin family.

Its subcellular location is the cytoplasm. Its function is as follows. Intracellular thiol proteinase inhibitor. This Dictyostelium discoideum (Social amoeba) protein is Cystatin-A3 (cpiC).